We begin with the raw amino-acid sequence, 307 residues long: Ribosomal RNA small subunit methyltransferase H (307 aa).

Residues 32–34, Asp52, Phe78, Asp100, and Gln107 contribute to the S-adenosyl-L-methionine site; that span reads GGH.

This sequence belongs to the methyltransferase superfamily. RsmH family.

It localises to the cytoplasm. It catalyses the reaction cytidine(1402) in 16S rRNA + S-adenosyl-L-methionine = N(4)-methylcytidine(1402) in 16S rRNA + S-adenosyl-L-homocysteine + H(+). In terms of biological role, specifically methylates the N4 position of cytidine in position 1402 (C1402) of 16S rRNA. This is Ribosomal RNA small subunit methyltransferase H from Coxiella burnetii (strain CbuG_Q212) (Coxiella burnetii (strain Q212)).